The sequence spans 569 residues: Proline--tRNA ligase (569 aa).

This sequence belongs to the class-II aminoacyl-tRNA synthetase family. ProS type 1 subfamily. Homodimer.

Its subcellular location is the cytoplasm. It catalyses the reaction tRNA(Pro) + L-proline + ATP = L-prolyl-tRNA(Pro) + AMP + diphosphate. Its function is as follows. Catalyzes the attachment of proline to tRNA(Pro) in a two-step reaction: proline is first activated by ATP to form Pro-AMP and then transferred to the acceptor end of tRNA(Pro). As ProRS can inadvertently accommodate and process non-cognate amino acids such as alanine and cysteine, to avoid such errors it has two additional distinct editing activities against alanine. One activity is designated as 'pretransfer' editing and involves the tRNA(Pro)-independent hydrolysis of activated Ala-AMP. The other activity is designated 'posttransfer' editing and involves deacylation of mischarged Ala-tRNA(Pro). The misacylated Cys-tRNA(Pro) is not edited by ProRS. The protein is Proline--tRNA ligase of Campylobacter jejuni subsp. jejuni serotype O:23/36 (strain 81-176).